A 279-amino-acid chain; its full sequence is Shikimate dehydrogenase (NADP(+)) (279 aa).

Shikimate contacts are provided by residues 20-22 (SRS) and Thr67. Catalysis depends on Lys71, which acts as the Proton acceptor. Asp83 is an NADP(+) binding site. Shikimate is bound by residues Asn92 and Asp108. NADP(+)-binding positions include 134 to 138 (GAGGA) and Leu223. A shikimate-binding site is contributed by Tyr225. Gly246 contacts NADP(+).

This sequence belongs to the shikimate dehydrogenase family. In terms of assembly, homodimer.

The catalysed reaction is shikimate + NADP(+) = 3-dehydroshikimate + NADPH + H(+). It functions in the pathway metabolic intermediate biosynthesis; chorismate biosynthesis; chorismate from D-erythrose 4-phosphate and phosphoenolpyruvate: step 4/7. In terms of biological role, involved in the biosynthesis of the chorismate, which leads to the biosynthesis of aromatic amino acids. Catalyzes the reversible NADPH linked reduction of 3-dehydroshikimate (DHSA) to yield shikimate (SA). This is Shikimate dehydrogenase (NADP(+)) from Cereibacter sphaeroides (strain KD131 / KCTC 12085) (Rhodobacter sphaeroides).